We begin with the raw amino-acid sequence, 573 residues long: Globulin-1 S allele (573 aa).

The or 21 signal peptide spans 1 to 18 (MVSARIVVLLAVLLCAAA). Residues 19 to 86 (AVASSWEDDN…DRSGEGSSED (68 aa)) constitute a propeptide that is removed on maturation. A disordered region spans residues 65–102 (EKRQERSRHEADDRSGEGSSEDEREREQEKEEKQKDRR). Cupin type-1 domains follow at residues 104–262 (YVFD…DRLE) and 311–493 (YSLL…EEVD). The segment at 288 to 315 (RHASEGGHGPHWPLPPFGESRGPYSLLD) is disordered. N-linked (GlcNAc...) asparagine glycosylation occurs at asparagine 349. Disordered regions lie at residues 382-416 (PHRQSQGGESERERGKGRRSEEEEESSEEQEEVGQ) and 498-573 (SRRE…TARM). The segment covering 390-402 (ESERERGKGRRSE) has biased composition (basic and acidic residues). The span at 403–413 (EEEESSEEQEE) shows a compositional bias: acidic residues. Composition is skewed to basic and acidic residues over residues 525 to 542 (EERHGGRGERERHGREER) and 549 to 561 (REGRHGRGRREEV).

The protein belongs to the 7S seed storage protein family. Post-translationally, three protein-processing steps occur in the formation of the mature protein from the primary translation product.

The sequence is that of Globulin-1 S allele (GLB1) from Zea mays (Maize).